Here is a 500-residue protein sequence, read N- to C-terminus: Glutamyl-tRNA(Gln) amidotransferase subunit A (500 aa).

Catalysis depends on charge relay system residues Lys81 and Ser161. The active-site Acyl-ester intermediate is Ser185.

This sequence belongs to the amidase family. GatA subfamily. Heterotrimer of A, B and C subunits.

The catalysed reaction is L-glutamyl-tRNA(Gln) + L-glutamine + ATP + H2O = L-glutaminyl-tRNA(Gln) + L-glutamate + ADP + phosphate + H(+). Its function is as follows. Allows the formation of correctly charged Gln-tRNA(Gln) through the transamidation of misacylated Glu-tRNA(Gln) in organisms which lack glutaminyl-tRNA synthetase. The reaction takes place in the presence of glutamine and ATP through an activated gamma-phospho-Glu-tRNA(Gln). The polypeptide is Glutamyl-tRNA(Gln) amidotransferase subunit A (Rhodospirillum rubrum (strain ATCC 11170 / ATH 1.1.1 / DSM 467 / LMG 4362 / NCIMB 8255 / S1)).